The following is a 250-amino-acid chain: tRNA (guanine-N(1)-)-methyltransferase (250 aa).

Residues G116 and 136-141 (IGDYVL) each bind S-adenosyl-L-methionine.

Belongs to the RNA methyltransferase TrmD family. As to quaternary structure, homodimer.

Its subcellular location is the cytoplasm. It catalyses the reaction guanosine(37) in tRNA + S-adenosyl-L-methionine = N(1)-methylguanosine(37) in tRNA + S-adenosyl-L-homocysteine + H(+). Its function is as follows. Specifically methylates guanosine-37 in various tRNAs. In Pseudomonas syringae pv. tomato (strain ATCC BAA-871 / DC3000), this protein is tRNA (guanine-N(1)-)-methyltransferase.